The chain runs to 476 residues: Glycogen synthase (476 aa).

Residue K15 participates in ADP-alpha-D-glucose binding.

The protein belongs to the glycosyltransferase 1 family. Bacterial/plant glycogen synthase subfamily.

It carries out the reaction [(1-&gt;4)-alpha-D-glucosyl](n) + ADP-alpha-D-glucose = [(1-&gt;4)-alpha-D-glucosyl](n+1) + ADP + H(+). Its pathway is glycan biosynthesis; glycogen biosynthesis. Synthesizes alpha-1,4-glucan chains using ADP-glucose. The polypeptide is Glycogen synthase (Yersinia pestis bv. Antiqua (strain Antiqua)).